Here is a 295-residue protein sequence, read N- to C-terminus: Undecaprenyl-diphosphatase (295 aa).

The next 6 membrane-spanning stretches (helical) occupy residues 39-59 (PGAAFTAIIQIGTELAVLLYF), 97-117 (WYIIIATIPILIAGVLFQHAI), 121-141 (LRNLWITVAMLFIFGVILWIV), 198-218 (AFLMAIPAVFGAGILEAVKAI), 232-252 (ATIAATVVAFVVGYIVIIGFL), and 263-283 (FAIYRIALAIIVAILLLCGVL).

The protein belongs to the UppP family.

It is found in the cell membrane. The enzyme catalyses di-trans,octa-cis-undecaprenyl diphosphate + H2O = di-trans,octa-cis-undecaprenyl phosphate + phosphate + H(+). In terms of biological role, catalyzes the dephosphorylation of undecaprenyl diphosphate (UPP). Confers resistance to bacitracin. This chain is Undecaprenyl-diphosphatase, found in Bifidobacterium animalis subsp. lactis (strain AD011).